The primary structure comprises 453 residues: MTRSIVSLQVGQCGNQVGLKFWEGISAEHGIDVDGKYIGDRPDQELHRIGVYYNESSSGSYVPRAAMLDLEPGVLMAIKNSKRGQLFHPDNFAYGQSGAGNNWAKGHYTEGAELVETALDIIRREAETCDVLQGFQVTHSLGGGTGSGMGTLLVSKIREEYPDRMMCTYSVLPSPKVSDTVVEPYNCTLSIHQLIENADCVFAIDNEALYNICYNTLKIEQPSYDELNSLISSVMSGITCSLRFPGQLNADLRKLAVNLVPFPRLHFFAVGHAPLAASNSAGYRSLSVPELAGQMFDRNNMMAEIDPREGRYLTAAVYFRGKVSTKEVEDEMTLMQTKNSAYFVEWIPHNIKTSVCDIPAAGEKISSAFIGNTTAIEATFKRFGNQFRSMFRRKAFLHWYKSEGMDELEFSEAESNLADLVSEYQQYGEATADGVEGYEEEGYENDHPEDDEE.

Residues Gln12, Glu71, Ser140, Gly144, Thr145, Gly146, Asn206, and Asn228 each coordinate GTP. A Mg(2+)-binding site is contributed by Glu71. The interval 431–453 is disordered; that stretch reads TADGVEGYEEEGYENDHPEDDEE. The segment covering 436-453 has biased composition (acidic residues); it reads EGYEEEGYENDHPEDDEE.

It belongs to the tubulin family. As to quaternary structure, dimer of alpha and beta chains. A typical microtubule is a hollow water-filled tube with an outer diameter of 25 nm and an inner diameter of 15 nM. Alpha-beta heterodimers associate head-to-tail to form protofilaments running lengthwise along the microtubule wall with the beta-tubulin subunit facing the microtubule plus end conferring a structural polarity. Microtubules usually have 13 protofilaments but different protofilament numbers can be found in some organisms and specialized cells. Requires Mg(2+) as cofactor.

The protein localises to the cytoplasm. The protein resides in the cytoskeleton. Its function is as follows. Tubulin is the major constituent of microtubules, a cylinder consisting of laterally associated linear protofilaments composed of alpha- and beta-tubulin heterodimers. Microtubules grow by the addition of GTP-tubulin dimers to the microtubule end, where a stabilizing cap forms. Below the cap, tubulin dimers are in GDP-bound state, owing to GTPase activity of alpha-tubulin. In Chondrus crispus (Carrageen Irish moss), this protein is Tubulin beta-1 chain (TUBB).